The chain runs to 831 residues: Leucine--tRNA ligase (831 aa).

Positions proline 35–histidine 45 match the 'HIGH' region motif. The short motif at lysine 600 to serine 604 is the 'KMSKS' region element. ATP is bound at residue lysine 603.

Belongs to the class-I aminoacyl-tRNA synthetase family.

It localises to the cytoplasm. It carries out the reaction tRNA(Leu) + L-leucine + ATP = L-leucyl-tRNA(Leu) + AMP + diphosphate. This Rickettsia bellii (strain RML369-C) protein is Leucine--tRNA ligase.